Consider the following 290-residue polypeptide: Glycine--tRNA ligase alpha subunit (290 aa).

The protein belongs to the class-II aminoacyl-tRNA synthetase family. In terms of assembly, tetramer of two alpha and two beta subunits.

The protein resides in the cytoplasm. The enzyme catalyses tRNA(Gly) + glycine + ATP = glycyl-tRNA(Gly) + AMP + diphosphate. The chain is Glycine--tRNA ligase alpha subunit from Maridesulfovibrio salexigens (strain ATCC 14822 / DSM 2638 / NCIMB 8403 / VKM B-1763) (Desulfovibrio salexigens).